The following is a 612-amino-acid chain: Dihydroxy-acid dehydratase (612 aa).

Asp-81 lines the Mg(2+) pocket. Cys-122 contacts [2Fe-2S] cluster. Mg(2+) contacts are provided by Asp-123 and Lys-124. Lys-124 is modified (N6-carboxylysine). Cys-195 is a binding site for [2Fe-2S] cluster. A Mg(2+)-binding site is contributed by Glu-491. Residue Ser-517 is the Proton acceptor of the active site.

It belongs to the IlvD/Edd family. In terms of assembly, homodimer. Requires [2Fe-2S] cluster as cofactor. Mg(2+) is required as a cofactor.

It carries out the reaction (2R)-2,3-dihydroxy-3-methylbutanoate = 3-methyl-2-oxobutanoate + H2O. The catalysed reaction is (2R,3R)-2,3-dihydroxy-3-methylpentanoate = (S)-3-methyl-2-oxopentanoate + H2O. It functions in the pathway amino-acid biosynthesis; L-isoleucine biosynthesis; L-isoleucine from 2-oxobutanoate: step 3/4. Its pathway is amino-acid biosynthesis; L-valine biosynthesis; L-valine from pyruvate: step 3/4. Functionally, functions in the biosynthesis of branched-chain amino acids. Catalyzes the dehydration of (2R,3R)-2,3-dihydroxy-3-methylpentanoate (2,3-dihydroxy-3-methylvalerate) into 2-oxo-3-methylpentanoate (2-oxo-3-methylvalerate) and of (2R)-2,3-dihydroxy-3-methylbutanoate (2,3-dihydroxyisovalerate) into 2-oxo-3-methylbutanoate (2-oxoisovalerate), the penultimate precursor to L-isoleucine and L-valine, respectively. The chain is Dihydroxy-acid dehydratase from Psychromonas ingrahamii (strain DSM 17664 / CCUG 51855 / 37).